We begin with the raw amino-acid sequence, 435 residues long: uncharacterized protein (435 aa).

The next 12 membrane-spanning stretches (helical) occupy residues 14–34 (VSMA…GVGA), 44–64 (TFIL…KLGA), 84–104 (IITG…IALF), 123–143 (FNIA…NFFG), 153–173 (FIVL…LITI), 187–207 (VSGM…FGVI), 224–244 (AIFI…ISAI), 267–287 (FLGN…ISSA), 324–344 (LYIT…EGVA), 346–366 (ITSA…YILI), 375–395 (IVIF…YYQW), and 400–420 (FVFY…IIYR).

Its subcellular location is the cell membrane. This is an uncharacterized protein from Methanocaldococcus jannaschii (strain ATCC 43067 / DSM 2661 / JAL-1 / JCM 10045 / NBRC 100440) (Methanococcus jannaschii).